The following is a 442-amino-acid chain: 3-phosphoshikimate 1-carboxyvinyltransferase (442 aa).

The span at 1–11 (MQVSRPLTVSA) shows a compositional bias: polar residues. A disordered region spans residues 1-25 (MQVSRPLTVSASPKGLSGRTRVPGD). The 3-phosphoshikimate site is built by lysine 26, serine 27, and arginine 31. Lysine 26 contributes to the phosphoenolpyruvate binding site. Phosphoenolpyruvate contacts are provided by glycine 98 and arginine 126. Positions 171, 173, 324, and 351 each coordinate 3-phosphoshikimate. Glutamine 173 is a phosphoenolpyruvate binding site. The active-site Proton acceptor is the aspartate 324. Positions 355 and 398 each coordinate phosphoenolpyruvate.

The protein belongs to the EPSP synthase family. In terms of assembly, monomer.

The protein resides in the cytoplasm. It catalyses the reaction 3-phosphoshikimate + phosphoenolpyruvate = 5-O-(1-carboxyvinyl)-3-phosphoshikimate + phosphate. It participates in metabolic intermediate biosynthesis; chorismate biosynthesis; chorismate from D-erythrose 4-phosphate and phosphoenolpyruvate: step 6/7. In terms of biological role, catalyzes the transfer of the enolpyruvyl moiety of phosphoenolpyruvate (PEP) to the 5-hydroxyl of shikimate-3-phosphate (S3P) to produce enolpyruvyl shikimate-3-phosphate and inorganic phosphate. This Gluconobacter oxydans (strain 621H) (Gluconobacter suboxydans) protein is 3-phosphoshikimate 1-carboxyvinyltransferase.